A 443-amino-acid chain; its full sequence is ATP-dependent protease ATPase subunit HslU (443 aa).

Residues Ile-19, 61-66 (GVGKTE), Asp-256, Glu-321, and Arg-393 contribute to the ATP site.

Belongs to the ClpX chaperone family. HslU subfamily. A double ring-shaped homohexamer of HslV is capped on each side by a ring-shaped HslU homohexamer. The assembly of the HslU/HslV complex is dependent on binding of ATP.

Its subcellular location is the cytoplasm. Functionally, ATPase subunit of a proteasome-like degradation complex; this subunit has chaperone activity. The binding of ATP and its subsequent hydrolysis by HslU are essential for unfolding of protein substrates subsequently hydrolyzed by HslV. HslU recognizes the N-terminal part of its protein substrates and unfolds these before they are guided to HslV for hydrolysis. This Ralstonia pickettii (strain 12J) protein is ATP-dependent protease ATPase subunit HslU.